The chain runs to 156 residues: MRTPSKQEDLVKAFKALLKEEKFSSQGEIVTALQEAGFDNINQSKISRMLTKFGAVRTRNAKMEMVYCLPTELGVPTASSPLKNLVLDIDHNHSVVVIRTSPGAAQLIARLLDSLGKAEGILGSIAGDDTIFSTPAPGFSTEELRDAILNLFDQEL.

The protein belongs to the ArgR family.

It localises to the cytoplasm. The protein operates within amino-acid biosynthesis; L-arginine biosynthesis [regulation]. Its function is as follows. Regulates arginine biosynthesis genes. The chain is Arginine repressor from Proteus mirabilis (strain HI4320).